Here is a 186-residue protein sequence, read N- to C-terminus: MNWRSEHIWIELITGSRKTSNFCWACILFLGSLGFLVVGTSSYLGRNLISVFPSQQIIFFPQGIVMSFYGIAGLFISSYLWCTISWNVGSGYDRFDRKEGIVCIFRWGFPGINRRIFLRFLMRDIQSIRMQVKEGLYPRRVLYMEIRGQGAIPLTRTDENFTPREIEQKAAELAYFLRVPIEGKRN.

2 consecutive transmembrane segments (helical) span residues 22–42 (FCWACILFLGSLGFLVVGTSS) and 57–77 (IIFFPQGIVMSFYGIAGLFIS).

It belongs to the Ycf4 family.

It is found in the plastid. The protein localises to the chloroplast thylakoid membrane. Seems to be required for the assembly of the photosystem I complex. The polypeptide is Photosystem I assembly protein Ycf4 (Dioscorea elephantipes (Elephant's foot yam)).